The primary structure comprises 544 residues: CTP synthase (544 aa).

Residues 1–266 (MATNYIFVTG…DDFVCDRFRL (266 aa)) are amidoligase domain. Ser-14 is a binding site for CTP. Ser-14 contacts UTP. ATP is bound by residues 15–20 (SLGKGI) and Asp-72. Residues Asp-72 and Glu-140 each contribute to the Mg(2+) site. Residues 147-149 (DIE), 187-192 (KTKPTQ), and Lys-223 each bind CTP. Residues 187-192 (KTKPTQ) and Lys-223 each bind UTP. 239 to 241 (KDV) contacts ATP. In terms of domain architecture, Glutamine amidotransferase type-1 spans 291-542 (TIGMVGKYVE…VKAAKEHQGK (252 aa)). Residue Gly-352 participates in L-glutamine binding. The Nucleophile; for glutamine hydrolysis role is filled by Cys-379. L-glutamine is bound by residues 380-383 (LGMQ), Glu-403, and Arg-470. Active-site residues include His-515 and Glu-517.

Belongs to the CTP synthase family. Homotetramer.

It carries out the reaction UTP + L-glutamine + ATP + H2O = CTP + L-glutamate + ADP + phosphate + 2 H(+). The enzyme catalyses L-glutamine + H2O = L-glutamate + NH4(+). It catalyses the reaction UTP + NH4(+) + ATP = CTP + ADP + phosphate + 2 H(+). The protein operates within pyrimidine metabolism; CTP biosynthesis via de novo pathway; CTP from UDP: step 2/2. Its activity is regulated as follows. Allosterically activated by GTP, when glutamine is the substrate; GTP has no effect on the reaction when ammonia is the substrate. The allosteric effector GTP functions by stabilizing the protein conformation that binds the tetrahedral intermediate(s) formed during glutamine hydrolysis. Inhibited by the product CTP, via allosteric rather than competitive inhibition. Its function is as follows. Catalyzes the ATP-dependent amination of UTP to CTP with either L-glutamine or ammonia as the source of nitrogen. Regulates intracellular CTP levels through interactions with the four ribonucleotide triphosphates. This Glaesserella parasuis serovar 5 (strain SH0165) (Haemophilus parasuis) protein is CTP synthase.